A 433-amino-acid chain; its full sequence is Ornithine decarboxylase 1B, chloroplastic (433 aa).

Lysine 96 carries the N6-(pyridoxal phosphate)lysine modification. Pyridoxal 5'-phosphate-binding positions include serine 228, glycine 266, and 299–302; that span reads EPGR. 342–343 contacts substrate; it reads YD. The active-site Proton donor; shared with dimeric partner is cysteine 378. Position 379 (aspartate 379) interacts with substrate. Tyrosine 407 contacts pyridoxal 5'-phosphate.

Belongs to the Orn/Lys/Arg decarboxylase class-II family. As to quaternary structure, homodimer. Only the dimer is catalytically active, as the active sites are constructed of residues from both monomers. Requires pyridoxal 5'-phosphate as cofactor.

Its subcellular location is the plastid. The protein localises to the chloroplast. The catalysed reaction is L-ornithine + H(+) = putrescine + CO2. It participates in alkaloid biosynthesis; nicotine biosynthesis. Its pathway is amine and polyamine biosynthesis; putrescine biosynthesis via L-ornithine pathway; putrescine from L-ornithine: step 1/1. In terms of biological role, involved in the biosynthesis of pyridine alkaloid natural products, leading mainly to the production of anabasine, anatabine, nicotine and nornicotine, effective deterrents against herbivores with antiparasitic and pesticide properties (neurotoxins); nornicotine serves as the precursor in the synthesis of the carcinogen compound N'-nitrosonornicotine (NNN). Catalyzes the first and rate-limiting step of polyamine biosynthesis that converts ornithine into putrescine, which is the precursor for the polyamines, spermidine and spermine. Polyamines are essential for cell proliferation and are implicated in cellular processes, ranging from DNA replication to apoptosis. The chain is Ornithine decarboxylase 1B, chloroplastic from Nicotiana tabacum (Common tobacco).